Reading from the N-terminus, the 494-residue chain is MAQPPPDQNFYHHPLPHTHTHPHPHSHPHPHSHPHPHHQHPQLQLPPQFRNPFDLLFDERTGAINYNYIRPYLPNQMPKPDVFPSEELPDSLVMRRPRRTRTTFTSSQIAELEQHFLQGRYLTAPRLADLSAKLALGTAQVKIWFKNRRRRHKIQSDQHKDQSYEGMPLSPGMKQSDGDPPSLQTLSLGGGATPNALTPSPTPSTPTAHMTEHYSESFNAYYNYNGGHNHAQANRHMHMQYPSGGGPGPGSTNVNGGQFFQQQQVHNHQQQLHHQGNHVPHQMQQQQQQAQQQQYHHFDFQQKQASACRVLVKDEPEADYNFNSSYYMRSGMSGATASASAVARGAASPGSEVYEPLTPKNDESPSLCGIGIGGPCAIAVGETEAADDMDDGTSKKTTLQILEPLKGLDKSCDDGSSDDMSTGIRALAGTGNRGAAFAKFGKPSPPQGPQPPLGMGGVAMGESNQYQCTMDTIMQAYNPHRNAAGNSQFAYCFN.

Disordered regions lie at residues 1-49 (MAQP…PPQF), 149-210 (RRRH…TAHM), and 263-293 (QQVHNHQQQLHHQGNHVPHQMQQQQQQAQQQ). A compositionally biased stretch (basic residues) spans 14–40 (PLPHTHTHPHPHSHPHPHSHPHPHHQH). Positions 97–156 (PRRTRTTFTSSQIAELEQHFLQGRYLTAPRLADLSAKLALGTAQVKIWFKNRRRRHKIQS) form a DNA-binding region, homeobox. Positions 154–163 (IQSDQHKDQS) are enriched in basic and acidic residues. The RNA-binding stretch occupies residues 433–440 (RGAAFAKF).

It belongs to the paired homeobox family. Bicoid subfamily. In terms of assembly, interacts with Bin1; in vitro and yeast cells. Interacts with bin3. Maternal expression is an anterior cap concentrated in the cortical cytoplasm. Its transcript is produced maternally and sequestered near the anterior pole of the mature oocyte. After egg deposition, it is translated into protein, which diffuses toward the posterior, forming a long-range anterior gradient.

It localises to the nucleus. Segment polarity transcription factor that provides positional cues for the development of head and thoracic segments. Forms a protein concentration gradient that patterns the anterior-posterior axis during embryogenesis and promotes the expression of anterior gap genes, such as hunchback (hb), ocelliless (oc), and buttonhead (btd). Binds to regulatory DNA sequences containing a 5'-TAATCC-3' sequence motif. Also binds RNA. Interacts with Bin1 to repress transcription of bicoid target genes in the anterior tip of the embryo; a process known as retraction. This is Homeotic protein bicoid from Drosophila melanogaster (Fruit fly).